The following is a 183-amino-acid chain: ATP synthase subunit b, chloroplastic (183 aa).

The helical transmembrane segment at 27–49 (LATNPINLSVVLGVLIFFGKGVL) threads the bilayer.

Belongs to the ATPase B chain family. As to quaternary structure, F-type ATPases have 2 components, F(1) - the catalytic core - and F(0) - the membrane proton channel. F(1) has five subunits: alpha(3), beta(3), gamma(1), delta(1), epsilon(1). F(0) has four main subunits: a(1), b(1), b'(1) and c(10-14). The alpha and beta chains form an alternating ring which encloses part of the gamma chain. F(1) is attached to F(0) by a central stalk formed by the gamma and epsilon chains, while a peripheral stalk is formed by the delta, b and b' chains.

The protein localises to the plastid. The protein resides in the chloroplast thylakoid membrane. In terms of biological role, f(1)F(0) ATP synthase produces ATP from ADP in the presence of a proton or sodium gradient. F-type ATPases consist of two structural domains, F(1) containing the extramembraneous catalytic core and F(0) containing the membrane proton channel, linked together by a central stalk and a peripheral stalk. During catalysis, ATP synthesis in the catalytic domain of F(1) is coupled via a rotary mechanism of the central stalk subunits to proton translocation. Its function is as follows. Component of the F(0) channel, it forms part of the peripheral stalk, linking F(1) to F(0). The protein is ATP synthase subunit b, chloroplastic of Ranunculus macranthus (Large buttercup).